Reading from the N-terminus, the 247-residue chain is MSTSNRILLGVNIDHVATLRQARGTRYPDPVKAALDAEEAGADGITVHLREDRRHIQERDVLLLKDVLQTRMNFEMGVTEEMMAFAERIRPAHICLVPETRQELTTEGGLDVAGQEARIKAAVERLSKIGSEVSLFIDADERQIEASRRVGAPAIELHTGRYADATTPTEVADELQRIIDGVNCGLNEGLIVNAGHGLHYHNVEAVAAIKGINELNIGHALVAHALFVGFKGAVAEMKALILAAAKA.

Asn12 contributes to the 3-amino-2-oxopropyl phosphate binding site. 1-deoxy-D-xylulose 5-phosphate is bound at residue 14 to 15 (DH). Arg23 serves as a coordination point for 3-amino-2-oxopropyl phosphate. His48 serves as the catalytic Proton acceptor. 1-deoxy-D-xylulose 5-phosphate-binding residues include Arg50 and His55. Glu75 serves as the catalytic Proton acceptor. Residue Thr105 coordinates 1-deoxy-D-xylulose 5-phosphate. His196 (proton donor) is an active-site residue. 3-amino-2-oxopropyl phosphate is bound by residues Gly197 and 218 to 219 (GH).

This sequence belongs to the PNP synthase family. Homooctamer; tetramer of dimers.

Its subcellular location is the cytoplasm. The enzyme catalyses 3-amino-2-oxopropyl phosphate + 1-deoxy-D-xylulose 5-phosphate = pyridoxine 5'-phosphate + phosphate + 2 H2O + H(+). It participates in cofactor biosynthesis; pyridoxine 5'-phosphate biosynthesis; pyridoxine 5'-phosphate from D-erythrose 4-phosphate: step 5/5. In terms of biological role, catalyzes the complicated ring closure reaction between the two acyclic compounds 1-deoxy-D-xylulose-5-phosphate (DXP) and 3-amino-2-oxopropyl phosphate (1-amino-acetone-3-phosphate or AAP) to form pyridoxine 5'-phosphate (PNP) and inorganic phosphate. The sequence is that of Pyridoxine 5'-phosphate synthase from Pseudomonas fluorescens (strain SBW25).